A 110-amino-acid polypeptide reads, in one-letter code: U1-lycotoxin-Ls1gg (110 aa).

Positions 1-20 (MKFVLLFGVLLVTLFSYSSA) are cleaved as a signal peptide. Residues 21–44 (EMLDDFDQADEDELLSLIEKEEAR) constitute a propeptide that is removed on maturation. 3 disulfides stabilise this stretch: Cys54/Cys71, Cys61/Cys89, and Cys73/Cys87.

This sequence belongs to the neurotoxin 19 (CSTX) family. 03 subfamily. As to expression, expressed by the venom gland.

The protein resides in the secreted. This chain is U1-lycotoxin-Ls1gg, found in Lycosa singoriensis (Wolf spider).